The following is a 1132-amino-acid chain: Mediator of RNA polymerase II transcription subunit 5 (1132 aa).

Over residues 998–1023 the composition is skewed to basic and acidic residues; the sequence is KGDVDIKGEDLHEKNDSAEVRQETQP. The disordered stretch occupies residues 998-1070; the sequence is KGDVDIKGED…RTNNVPMIKA (73 aa). The span at 1047-1057 shows a compositional bias: acidic residues; it reads YEEEEENEDND.

Belongs to the Mediator complex subunit 5 family. In terms of assembly, component of the Mediator complex, which is composed of at least 21 subunits that form three structurally distinct submodules. The Mediator head module contains MED6, MED8, MED11, SRB4/MED17, SRB5/MED18, ROX3/MED19, SRB2/MED20 and SRB6/MED22, the middle module contains MED1, MED4, NUT1/MED5, MED7, CSE2/MED9, NUT2/MED10, SRB7/MED21 and SOH1/MED31, and the tail module contains MED2, PGD1/MED3, RGR1/MED14, GAL11/MED15 and SIN4/MED16. The head and the middle modules interact directly with RNA polymerase II, whereas the elongated tail module interacts with gene-specific regulatory proteins.

The protein resides in the nucleus. Its function is as follows. Component of the Mediator complex, a coactivator involved in the regulated transcription of nearly all RNA polymerase II-dependent genes. Mediator functions as a bridge to convey information from gene-specific regulatory proteins to the basal RNA polymerase II transcription machinery. The Mediator complex, having a compact conformation in its free form, is recruited to promoters by direct interactions with regulatory proteins and serves for the assembly of a functional preinitiation complex with RNA polymerase II and the general transcription factors. The Mediator complex unfolds to an extended conformation and partially surrounds RNA polymerase II, specifically interacting with the unphosphorylated form of the C-terminal domain (CTD) of RNA polymerase II. The Mediator complex dissociates from the RNA polymerase II holoenzyme and stays at the promoter when transcriptional elongation begins. The chain is Mediator of RNA polymerase II transcription subunit 5 (NUT1) from Saccharomyces cerevisiae (strain ATCC 204508 / S288c) (Baker's yeast).